The following is a 639-amino-acid chain: 3-hydroxybenzoate 4-monooxygenase (639 aa).

Residues 34 to 64 (DVLIVGCGPAGLTLAAQLAAFPDIRTCIVEQ), Q73, V166, N212, 269 to 271 (RFY), Y317, D349, and S365 each bind FAD.

The protein belongs to the PheA/TfdB FAD monooxygenase family. As to quaternary structure, homodimer. The cofactor is FAD.

The enzyme catalyses 3-hydroxybenzoate + NADPH + O2 + H(+) = 3,4-dihydroxybenzoate + NADP(+) + H2O. Its function is as follows. Converts 3-hydroxybenzoate (m-hydroxybenzoate), and to a lesser extent p-hydroxybenzoate, to 3,4-dihydroxybenzoate (protocatechuate). Also acts on a number of analogs of 3-hydroxybenzoate substituted in the 2, 4, 5 and 6 positions. The chain is 3-hydroxybenzoate 4-monooxygenase (mobA) from Comamonas testosteroni (Pseudomonas testosteroni).